The following is a 1756-amino-acid chain: Protein TIC 214 (1756 aa).

Transmembrane regions (helical) follow at residues 18-38, 54-74, 79-99, 128-148, 163-183, and 210-230; these read VSGP…LPFG, GYGI…FLSM, IYAA…YMFF, LFMD…NPVL, ISFM…LTIF, and FSLL…LPFL. The segment at 1469 to 1504 is disordered; the sequence is KNKQVEDGQDKNGQVEDQDGQDQDGQVEDQQTDGKK. Over residues 1471–1482 the composition is skewed to basic and acidic residues; the sequence is KQVEDGQDKNGQ. The segment covering 1484–1499 has biased composition (acidic residues); it reads EDQDGQDQDGQVEDQQ.

It belongs to the TIC214 family. Part of the Tic complex.

The protein localises to the plastid. Its subcellular location is the chloroplast inner membrane. In terms of biological role, involved in protein precursor import into chloroplasts. May be part of an intermediate translocation complex acting as a protein-conducting channel at the inner envelope. This chain is Protein TIC 214, found in Pinus thunbergii (Japanese black pine).